The sequence spans 528 residues: Calcium-dependent protein kinase 17 (528 aa).

Residues 1–65 (MGNCCSHGRD…GPIGPVLGRP (65 aa)) are disordered. Residue G2 is the site of N-myristoyl glycine attachment. Residues 20-45 (NGASASNAANSTGPTAEASVPQSKHA) show a composition bias toward low complexity. One can recognise a Protein kinase domain in the interval 73–331 (YSLGKELGRG…AAQVLNHPWI (259 aa)). ATP is bound by residues 79–87 (LGRGQFGVT) and K102. D197 (proton acceptor) is an active-site residue. Position 237 is a phosphoserine (S237). An autoinhibitory domain region spans residues 337-367 (APDVPLDNAVMSRLKQFKAMNNFKKVALRVI). EF-hand domains follow at residues 374 to 409 (EEIM…QGTR), 410 to 445 (LSEY…INRL), 446 to 481 (DREE…FGMN), and 485 to 516 (DIKE…GNPD). Positions 387, 389, 391, 393, 398, 423, 425, 427, 429, 434, 459, 461, 463, 465, 470, 494, 496, 498, 500, and 505 each coordinate Ca(2+).

It belongs to the protein kinase superfamily. Ser/Thr protein kinase family. CDPK subfamily.

The protein localises to the membrane. The enzyme catalyses L-seryl-[protein] + ATP = O-phospho-L-seryl-[protein] + ADP + H(+). The catalysed reaction is L-threonyl-[protein] + ATP = O-phospho-L-threonyl-[protein] + ADP + H(+). Activated by calcium. Autophosphorylation may play an important role in the regulation of the kinase activity. May play a role in signal transduction pathways that involve calcium as a second messenger. The chain is Calcium-dependent protein kinase 17 (CPK17) from Arabidopsis thaliana (Mouse-ear cress).